A 332-amino-acid polypeptide reads, in one-letter code: Galactinol synthase 7 (332 aa).

The active site involves Lys-101. Mn(2+)-binding residues include Asp-117, Asp-119, and His-255.

It belongs to the glycosyltransferase 8 family. Galactosyltransferase subfamily. A divalent metal cation is required as a cofactor.

The protein localises to the cytoplasm. It catalyses the reaction myo-inositol + UDP-alpha-D-galactose = alpha-D-galactosyl-(1-&gt;3)-1D-myo-inositol + UDP + H(+). Galactinol synthase involved in the biosynthesis of raffinose family oligosaccharides (RFOs) that function as osmoprotectants. May promote plant stress tolerance. This Arabidopsis thaliana (Mouse-ear cress) protein is Galactinol synthase 7 (GOLS7).